We begin with the raw amino-acid sequence, 306 residues long: Pantothenate kinase (306 aa).

Position 91–98 (G91–S98) interacts with ATP.

The protein belongs to the prokaryotic pantothenate kinase family.

The protein resides in the cytoplasm. The enzyme catalyses (R)-pantothenate + ATP = (R)-4'-phosphopantothenate + ADP + H(+). Its pathway is cofactor biosynthesis; coenzyme A biosynthesis; CoA from (R)-pantothenate: step 1/5. The chain is Pantothenate kinase from Streptococcus pyogenes serotype M5 (strain Manfredo).